Reading from the N-terminus, the 265-residue chain is Translation initiation factor 2 subunit alpha (265 aa).

The 71-residue stretch at 12-82 (GELVIGTVKK…KMRVVEVSLK (71 aa)) folds into the S1 motif domain.

Belongs to the eIF-2-alpha family. In terms of assembly, heterotrimer composed of an alpha, a beta and a gamma chain.

Its function is as follows. eIF-2 functions in the early steps of protein synthesis by forming a ternary complex with GTP and initiator tRNA. The polypeptide is Translation initiation factor 2 subunit alpha (Pyrobaculum aerophilum (strain ATCC 51768 / DSM 7523 / JCM 9630 / CIP 104966 / NBRC 100827 / IM2)).